We begin with the raw amino-acid sequence, 110 residues long: Large ribosomal subunit protein uL22 (110 aa).

The protein belongs to the universal ribosomal protein uL22 family. As to quaternary structure, part of the 50S ribosomal subunit.

Functionally, this protein binds specifically to 23S rRNA; its binding is stimulated by other ribosomal proteins, e.g. L4, L17, and L20. It is important during the early stages of 50S assembly. It makes multiple contacts with different domains of the 23S rRNA in the assembled 50S subunit and ribosome. The globular domain of the protein is located near the polypeptide exit tunnel on the outside of the subunit, while an extended beta-hairpin is found that lines the wall of the exit tunnel in the center of the 70S ribosome. This chain is Large ribosomal subunit protein uL22, found in Aggregatibacter actinomycetemcomitans (Actinobacillus actinomycetemcomitans).